Reading from the N-terminus, the 332-residue chain is Glycerol-3-phosphate dehydrogenase [NAD(P)+] (332 aa).

Ser11, Phe12, Lys32, and Lys106 together coordinate NADPH. Sn-glycerol 3-phosphate-binding residues include Lys106, Gly137, and Ser139. Ala141 is a binding site for NADPH. Residues Lys192, Asp245, Ser255, Arg256, and Asn257 each contribute to the sn-glycerol 3-phosphate site. The active-site Proton acceptor is Lys192. Arg256 serves as a coordination point for NADPH. NADPH is bound by residues Val280 and Glu282.

This sequence belongs to the NAD-dependent glycerol-3-phosphate dehydrogenase family.

It is found in the cytoplasm. The enzyme catalyses sn-glycerol 3-phosphate + NAD(+) = dihydroxyacetone phosphate + NADH + H(+). It catalyses the reaction sn-glycerol 3-phosphate + NADP(+) = dihydroxyacetone phosphate + NADPH + H(+). It functions in the pathway membrane lipid metabolism; glycerophospholipid metabolism. In terms of biological role, catalyzes the reduction of the glycolytic intermediate dihydroxyacetone phosphate (DHAP) to sn-glycerol 3-phosphate (G3P), the key precursor for phospholipid synthesis. This chain is Glycerol-3-phosphate dehydrogenase [NAD(P)+], found in Staphylococcus carnosus (strain TM300).